A 178-amino-acid chain; its full sequence is Large ribosomal subunit protein uL6 (178 aa).

It belongs to the universal ribosomal protein uL6 family. As to quaternary structure, part of the 50S ribosomal subunit.

This protein binds to the 23S rRNA, and is important in its secondary structure. It is located near the subunit interface in the base of the L7/L12 stalk, and near the tRNA binding site of the peptidyltransferase center. The chain is Large ribosomal subunit protein uL6 from Thermobifida fusca (strain YX).